We begin with the raw amino-acid sequence, 445 residues long: UPF0210 protein SMU_73 (445 aa).

It belongs to the UPF0210 family. In terms of assembly, homodimer.

This Streptococcus mutans serotype c (strain ATCC 700610 / UA159) protein is UPF0210 protein SMU_73.